The chain runs to 103 residues: Small ribosomal subunit protein uS10 (103 aa).

The protein belongs to the universal ribosomal protein uS10 family. In terms of assembly, part of the 30S ribosomal subunit.

In terms of biological role, involved in the binding of tRNA to the ribosomes. This Ruminiclostridium cellulolyticum (strain ATCC 35319 / DSM 5812 / JCM 6584 / H10) (Clostridium cellulolyticum) protein is Small ribosomal subunit protein uS10.